The chain runs to 271 residues: Phosphate import ATP-binding protein PstB 3 (271 aa).

An ABC transporter domain is found at 20–266 (LRVEGLGFYY…PQETQTRDYV (247 aa)). An ATP-binding site is contributed by 52–59 (GPSGCGKS).

It belongs to the ABC transporter superfamily. Phosphate importer (TC 3.A.1.7) family. In terms of assembly, the complex is composed of two ATP-binding proteins (PstB), two transmembrane proteins (PstC and PstA) and a solute-binding protein (PstS).

Its subcellular location is the cell inner membrane. It catalyses the reaction phosphate(out) + ATP + H2O = ADP + 2 phosphate(in) + H(+). In terms of biological role, part of the ABC transporter complex PstSACB involved in phosphate import. Responsible for energy coupling to the transport system. This Synechocystis sp. (strain ATCC 27184 / PCC 6803 / Kazusa) protein is Phosphate import ATP-binding protein PstB 3.